We begin with the raw amino-acid sequence, 689 residues long: Glycine--tRNA ligase beta subunit (689 aa).

This sequence belongs to the class-II aminoacyl-tRNA synthetase family. Tetramer of two alpha and two beta subunits.

It localises to the cytoplasm. It catalyses the reaction tRNA(Gly) + glycine + ATP = glycyl-tRNA(Gly) + AMP + diphosphate. The protein is Glycine--tRNA ligase beta subunit of Acinetobacter baumannii (strain ATCC 17978 / DSM 105126 / CIP 53.77 / LMG 1025 / NCDC KC755 / 5377).